We begin with the raw amino-acid sequence, 182 residues long: Translation initiation factor IF-3 (182 aa).

Belongs to the IF-3 family. In terms of assembly, monomer.

It localises to the cytoplasm. Functionally, IF-3 binds to the 30S ribosomal subunit and shifts the equilibrium between 70S ribosomes and their 50S and 30S subunits in favor of the free subunits, thus enhancing the availability of 30S subunits on which protein synthesis initiation begins. The protein is Translation initiation factor IF-3 of Tropheryma whipplei (strain TW08/27) (Whipple's bacillus).